The following is a 598-amino-acid chain: MNRIRNFSIIAHIDHGKSTLSDRLIQVSGIVAARDFRDQILDSMDLERERGITIKSQTICLPYKAKDGAVYSLNLIDTPGHVDFSYEVSRAIASCEGALILIDASQGVEAQTVANLYLAVDHDLEIIPVINKIDLISADVERVMEQIEEDLGLDSSAAVKVSAKEGVGIEDLMETIVAKLPPPKGNLEAPLQALIFDSTYDDFRGTVIHVRVFEGKVKPGDMIMFMSNDSVYKVEEVGIFQIVRKPRKVLAAGEVGYIIAGIKSLSDTRCGDTITLKTNRCAAAMPGFREAKPVVFSSIFPIGSDEYEDLATAIDKLKLNDASLVYEKTSSLALGFGFRCGFLGLLHLEIVQERLEREYDQSLIITAPTVRYEVVYHDGTSMFIDNPELFPDPTLIQTTREPFIKASIIIPDKYMGAVMTLCMERRGISTTYHYLTGSRMEMVFELPLAEVMYDFYDKLKTVTQGYGSFDYEMLDYRDSRLVKLDILVNGERVDALSQLAHEDKAVERARHACKMLSEEIPRQMFKIPIQGAIGGKIISRETISALRKDVTAKCYGGDISRKRKLLEKQKKGKKRMKTIGKVAIPQSAFLAVLKSDQT.

The region spanning 2–184 (NRIRNFSIIA…TIVAKLPPPK (183 aa)) is the tr-type G domain. GTP-binding positions include 14–19 (DHGKST) and 131–134 (NKID).

The protein belongs to the TRAFAC class translation factor GTPase superfamily. Classic translation factor GTPase family. LepA subfamily.

It is found in the cell inner membrane. The catalysed reaction is GTP + H2O = GDP + phosphate + H(+). Its function is as follows. Required for accurate and efficient protein synthesis under certain stress conditions. May act as a fidelity factor of the translation reaction, by catalyzing a one-codon backward translocation of tRNAs on improperly translocated ribosomes. Back-translocation proceeds from a post-translocation (POST) complex to a pre-translocation (PRE) complex, thus giving elongation factor G a second chance to translocate the tRNAs correctly. Binds to ribosomes in a GTP-dependent manner. In Desulfosudis oleivorans (strain DSM 6200 / JCM 39069 / Hxd3) (Desulfococcus oleovorans), this protein is Elongation factor 4.